The sequence spans 607 residues: Protein PLASTID MOVEMENT IMPAIRED 2 (607 aa).

2 coiled-coil regions span residues 66–295 (KAKK…NAEL) and 329–445 (MLER…ESRR).

Belongs to the WEB family. In terms of assembly, interacts with WEB1. As to expression, ubiquitous but preferentially in chloroplast-containing tissues.

It localises to the cytoplasm. In terms of biological role, required for the chloroplast avoidance response under high intensity blue light. This avoidance response consists in the relocation of chloroplasts on the anticlinal side of exposed cells. Acts in association with WEB1 to maintain the velocity of chloroplast photorelocation movement via cp-actin filaments regulation. The polypeptide is Protein PLASTID MOVEMENT IMPAIRED 2 (PMI2) (Arabidopsis thaliana (Mouse-ear cress)).